The primary structure comprises 335 residues: Adenosine deaminase (335 aa).

Zn(2+)-binding residues include His-12 and His-14. Substrate-binding residues include His-14 and Asp-16. His-197 serves as a coordination point for Zn(2+). Glu-200 serves as the catalytic Proton donor. Asp-278 serves as a coordination point for Zn(2+).

The protein belongs to the metallo-dependent hydrolases superfamily. Adenosine and AMP deaminases family. Adenosine deaminase subfamily. It depends on Zn(2+) as a cofactor.

The enzyme catalyses adenosine + H2O + H(+) = inosine + NH4(+). The catalysed reaction is 2'-deoxyadenosine + H2O + H(+) = 2'-deoxyinosine + NH4(+). In terms of biological role, catalyzes the hydrolytic deamination of adenosine and 2-deoxyadenosine. The chain is Adenosine deaminase from Clostridium botulinum (strain Kyoto / Type A2).